The sequence spans 400 residues: MAKAKFERTKPHVNIGTIGHVDHGKTTTTAAITLVLSKVGKASFKKYDEIDAAPEERERGITINTAHVEYETDNRHYAHVDCPGHADYIKNMITGAAQMDGAILVVSAADGPMPQTREHILLARQVGVPYIVVWLNKADMVDDPELMELVEMEVRELLSSYEFPGDDIPIVAGSGLKALECGCGKRECEWCGKIWALMDEVDKYIPTPERATDKPFLMPVEDVFTITGRGTVATGRVERGTIKVGEEVEIVGLAESTRKTVVTGVEMFRKLLDFAQAGDNIGTLLRGVERKDIERGQVLAKPGSIKPHTKFTAEVYVLSKEEGGRHTPFFNGYRPQFYFRTTDVTGFIELPEGVEMCMPGDNIKMTIELGKTIAIEEGLRFAIREGGRTVGAGVVTGIIE.

The 200-residue stretch at 10–209 folds into the tr-type G domain; sequence KPHVNIGTIG…EVDKYIPTPE (200 aa). Residues 19 to 26 are G1; it reads GHVDHGKT. Position 19–26 (19–26) interacts with GTP; sequence GHVDHGKT. Thr-26 lines the Mg(2+) pocket. Residues 60 to 64 are G2; the sequence is GITIN. The segment at 81–84 is G3; it reads DCPG. Residues 81-85 and 136-139 contribute to the GTP site; these read DCPGH and NKAD. The segment at 136–139 is G4; the sequence is NKAD. Positions 174-176 are G5; sequence SGL.

Belongs to the TRAFAC class translation factor GTPase superfamily. Classic translation factor GTPase family. EF-Tu/EF-1A subfamily. In terms of assembly, monomer.

It localises to the cytoplasm. It carries out the reaction GTP + H2O = GDP + phosphate + H(+). Its function is as follows. GTP hydrolase that promotes the GTP-dependent binding of aminoacyl-tRNA to the A-site of ribosomes during protein biosynthesis. This chain is Elongation factor Tu, found in Heliobacterium modesticaldum (strain ATCC 51547 / Ice1).